Consider the following 523-residue polypeptide: Leucine-rich repeat-containing protein 27 (523 aa).

Residues 1–26 form a disordered region; sequence MEDTSPQAVAEKAAKDPKAAKDLKDD. A compositionally biased stretch (basic and acidic residues) spans 12–26; it reads KAAKDPKAAKDLKDD. 5 LRR repeats span residues 55–76, 77–98, 101–122, 124–145, and 147–168; these read SSPV…FKIP, NLQQ…FFQL, NLTW…IGSH, HLKT…LGQV, and TLTA…IVQK. Disordered stretches follow at residues 206–236 and 372–394; these read QYPV…ADFF and REQT…HSNM. Composition is skewed to basic and acidic residues over residues 227–236 and 372–385; these read DQEKEKADFF and REQT…RELS. Coiled-coil stretches lie at residues 335 to 374 and 463 to 494; these read VHAN…WREQ and MQDI…TLNK. A disordered region spans residues 503 to 523; the sequence is GNLSLHPPASQPQNIFFNTKS. Over residues 513 to 523 the composition is skewed to polar residues; the sequence is QPQNIFFNTKS.

The sequence is that of Leucine-rich repeat-containing protein 27 (Lrrc27) from Mus musculus (Mouse).